A 218-amino-acid polypeptide reads, in one-letter code: Ribose-5-phosphate isomerase A (218 aa).

Residues 28–31 (SGST), 81–84 (DGAD), and 94–97 (KGKG) contribute to the substrate site. Glu103 (proton acceptor) is an active-site residue. Residue Lys121 participates in substrate binding.

This sequence belongs to the ribose 5-phosphate isomerase family. As to quaternary structure, homodimer.

It carries out the reaction aldehydo-D-ribose 5-phosphate = D-ribulose 5-phosphate. The protein operates within carbohydrate degradation; pentose phosphate pathway; D-ribose 5-phosphate from D-ribulose 5-phosphate (non-oxidative stage): step 1/1. In terms of biological role, catalyzes the reversible conversion of ribose-5-phosphate to ribulose 5-phosphate. In Wigglesworthia glossinidia brevipalpis, this protein is Ribose-5-phosphate isomerase A.